A 317-amino-acid polypeptide reads, in one-letter code: Transcriptional regulator LsrR (317 aa).

Positions 33-56 form a DNA-binding region, H-T-H motif; it reads QSEISDRLGLTRLKVSRLLEKGHQ.

Belongs to the SorC transcriptional regulatory family.

The protein resides in the cytoplasm. Inactivated by phosphorylated autoinducer-2 (phospho-AI-2). Phospho-AI-2 acts by binding to LsrR, which is then unable to bind to the promoter regions, allowing the transcription of the target genes. In terms of biological role, transcriptional regulator that represses the expression of the lsr operon in the absence of the quorum-sensing signaling molecule autoinducer 2 (AI-2). It also represses the expression of the lsrRK operon. Acts by binding directly to the lsrA and lsrR promoter regions. In the presence of phosphorylated autoinducer-2 (phospho-AI-2), LsrR is inactivated, leading to the transcription of the genes. This is Transcriptional regulator LsrR (lsrR) from Escherichia coli O157:H7.